Reading from the N-terminus, the 436-residue chain is Ribosomal protein uS12 methylthiotransferase RimO (436 aa).

An MTTase N-terminal domain is found at 2 to 114; that stretch reads PNLYLVSLGC…IDEMILKKQN (113 aa). 6 residues coordinate [4Fe-4S] cluster: C11, C45, C77, C146, C150, and C153. In terms of domain architecture, Radical SAM core spans 132–363; the sequence is TGSSYHAYIK…IKKQIEGSFK (232 aa). One can recognise a TRAM domain in the interval 363 to 434; it reads KSLVGEVIKV…KDKLIGEIIC (72 aa).

The protein belongs to the methylthiotransferase family. RimO subfamily. [4Fe-4S] cluster serves as cofactor.

Its subcellular location is the cytoplasm. It catalyses the reaction L-aspartate(89)-[ribosomal protein uS12]-hydrogen + (sulfur carrier)-SH + AH2 + 2 S-adenosyl-L-methionine = 3-methylsulfanyl-L-aspartate(89)-[ribosomal protein uS12]-hydrogen + (sulfur carrier)-H + 5'-deoxyadenosine + L-methionine + A + S-adenosyl-L-homocysteine + 2 H(+). Catalyzes the methylthiolation of an aspartic acid residue of ribosomal protein uS12. This chain is Ribosomal protein uS12 methylthiotransferase RimO, found in Campylobacter fetus subsp. fetus (strain 82-40).